Here is a 451-residue protein sequence, read N- to C-terminus: Ribulose bisphosphate carboxylase large chain (451 aa).

An N6,N6,N6-trimethyllysine modification is found at lysine 5. 2 residues coordinate substrate: asparagine 114 and threonine 164. Lysine 166 serves as the catalytic Proton acceptor. Lysine 168 provides a ligand contact to substrate. Mg(2+) contacts are provided by lysine 192, aspartate 194, and glutamate 195. Residue lysine 192 is modified to N6-carboxylysine. Catalysis depends on histidine 285, which acts as the Proton acceptor. Substrate contacts are provided by arginine 286, histidine 318, and serine 370.

It belongs to the RuBisCO large chain family. Type I subfamily. In terms of assembly, heterohexadecamer of 8 large chains and 8 small chains; disulfide-linked. The disulfide link is formed within the large subunit homodimers. It depends on Mg(2+) as a cofactor. Post-translationally, the disulfide bond which can form in the large chain dimeric partners within the hexadecamer appears to be associated with oxidative stress and protein turnover.

Its subcellular location is the plastid. It localises to the chloroplast. The catalysed reaction is 2 (2R)-3-phosphoglycerate + 2 H(+) = D-ribulose 1,5-bisphosphate + CO2 + H2O. The enzyme catalyses D-ribulose 1,5-bisphosphate + O2 = 2-phosphoglycolate + (2R)-3-phosphoglycerate + 2 H(+). Its function is as follows. RuBisCO catalyzes two reactions: the carboxylation of D-ribulose 1,5-bisphosphate, the primary event in carbon dioxide fixation, as well as the oxidative fragmentation of the pentose substrate in the photorespiration process. Both reactions occur simultaneously and in competition at the same active site. This chain is Ribulose bisphosphate carboxylase large chain, found in Aristea glauca.